The chain runs to 444 residues: MTESLWHERRLTEEKKRRNDHRSPYQRDRARILHSAAFRRLQAKTQVLGVGMNDFYRTRLTHSLEVSQIGTGIRAQLKQKRPEFDHLFDSMSLIESLCLAHDIGHPPFGHGGEVALNYMMRDHGGFEGNGQTFRILTGLEPYTEYYGMNLCRRTLLGILKYPAPYSSLYRASGNKPVNNIRQLKPSQWTPVKGIFDDDSGILDWVLEPLNGSDRERFLSHRDLGANKHLRTQFKSLDCSVMELADDIAYAVHDLEDAIVMGIVTPSQWQQDVASKLTLSHDAWIKEEFTNIGQNLFSHQHHLRKDAIGTLVNGFVTAIDIVEDRAFTDPLLRFNAGLDTSFSEALEVLKQFVYKYVIRKPEIQMLEYKGQQIVMELFEAFESDPERLLPTHTQERWRESHTKGLNSHRVIADYISGMTDEFAARLHQHLFNPKAGSMIELNGEL.

The disordered stretch occupies residues 1-26 (MTESLWHERRLTEEKKRRNDHRSPYQ). The region spanning 59–250 (RLTHSLEVSQ…MELADDIAYA (192 aa)) is the HD domain.

The protein belongs to the dGTPase family. Type 2 subfamily.

This Shewanella sediminis (strain HAW-EB3) protein is Deoxyguanosinetriphosphate triphosphohydrolase-like protein.